A 155-amino-acid chain; its full sequence is Protein FAM163B (155 aa).

A helical membrane pass occupies residues 6-26; that stretch reads VVITGGILATVILLCIIAVLC.

The protein belongs to the FAM163 family.

The protein localises to the membrane. This chain is Protein FAM163B (fam163b), found in Xenopus tropicalis (Western clawed frog).